The chain runs to 359 residues: UPF0283 membrane protein RHE_CH02332 (359 aa).

Residues 1–61 form a disordered region; the sequence is MSKPPSDLPR…EDPFINPDRD (61 aa). 2 consecutive transmembrane segments (helical) span residues 77–97 and 111–131; these read FGKI…GLWT and LGYA…ALVI.

It belongs to the UPF0283 family.

Its subcellular location is the cell inner membrane. The polypeptide is UPF0283 membrane protein RHE_CH02332 (Rhizobium etli (strain ATCC 51251 / DSM 11541 / JCM 21823 / NBRC 15573 / CFN 42)).